The following is a 1398-amino-acid chain: DNA-directed RNA polymerase subunit beta' (1398 aa).

4 residues coordinate Zn(2+): Cys-71, Cys-73, Cys-86, and Cys-89. Residues Asp-462, Asp-464, and Asp-466 each coordinate Mg(2+). Positions 810, 884, 891, and 894 each coordinate Zn(2+).

Belongs to the RNA polymerase beta' chain family. The RNAP catalytic core consists of 2 alpha, 1 beta, 1 beta' and 1 omega subunit. When a sigma factor is associated with the core the holoenzyme is formed, which can initiate transcription. Mg(2+) serves as cofactor. It depends on Zn(2+) as a cofactor.

The catalysed reaction is RNA(n) + a ribonucleoside 5'-triphosphate = RNA(n+1) + diphosphate. DNA-dependent RNA polymerase catalyzes the transcription of DNA into RNA using the four ribonucleoside triphosphates as substrates. The sequence is that of DNA-directed RNA polymerase subunit beta' from Mesorhizobium japonicum (strain LMG 29417 / CECT 9101 / MAFF 303099) (Mesorhizobium loti (strain MAFF 303099)).